We begin with the raw amino-acid sequence, 369 residues long: GDSL esterase/lipase At5g41890 (369 aa).

Ser-32 (nucleophile) is an active-site residue. Active-site residues include Asp-334 and His-337.

It belongs to the 'GDSL' lipolytic enzyme family.

The polypeptide is GDSL esterase/lipase At5g41890 (Arabidopsis thaliana (Mouse-ear cress)).